Reading from the N-terminus, the 119-residue chain is uncharacterized protein (119 aa).

In terms of domain architecture, ABC transmembrane type-1 spans 1-112 (MVFNMRSTRG…FISSCLLLVL (112 aa)). The next 2 membrane-spanning stretches (helical) occupy residues 51–73 (VLAW…ATRF) and 91–111 (FEIA…LLLV).

It belongs to the binding-protein-dependent transport system permease family. CysTW subfamily.

It localises to the cell membrane. This is an uncharacterized protein from Haemophilus influenzae (strain ATCC 51907 / DSM 11121 / KW20 / Rd).